We begin with the raw amino-acid sequence, 287 residues long: MAGGREIKTKIKSVQNTRKVTRALEMVSASKIRKAQERMKTSRPYAQAMKQVIGHLAQASTDFQHPFLIEREQVKRVGYIVISSDRGLAGGLNNNLFRKMLGEVRPWQDKGAEIDVVTIGQKASAFFRRVKVNMVGSVTHLGDSPQVEQLIGVIKVMIDAFIEGKVDRVYLVYNRFVNTMTQKASFDQLLPLPAAEHKVAHHDWDYLYEPDAASVLEHVMTRYIESLVYQAVLENVASEHAARMVAMKAASDNANKMIGTLQLVYNKARQAAITQEISEIVSGAAAV.

Belongs to the ATPase gamma chain family. As to quaternary structure, F-type ATPases have 2 components, CF(1) - the catalytic core - and CF(0) - the membrane proton channel. CF(1) has five subunits: alpha(3), beta(3), gamma(1), delta(1), epsilon(1). CF(0) has three main subunits: a, b and c.

It is found in the cell inner membrane. In terms of biological role, produces ATP from ADP in the presence of a proton gradient across the membrane. The gamma chain is believed to be important in regulating ATPase activity and the flow of protons through the CF(0) complex. This Xanthomonas axonopodis pv. citri (strain 306) protein is ATP synthase gamma chain.